The primary structure comprises 142 residues: Large ribosomal subunit protein uL11 (142 aa).

This sequence belongs to the universal ribosomal protein uL11 family. Part of the ribosomal stalk of the 50S ribosomal subunit. Interacts with L10 and the large rRNA to form the base of the stalk. L10 forms an elongated spine to which L12 dimers bind in a sequential fashion forming a multimeric L10(L12)X complex. One or more lysine residues are methylated.

Its function is as follows. Forms part of the ribosomal stalk which helps the ribosome interact with GTP-bound translation factors. This chain is Large ribosomal subunit protein uL11, found in Colwellia psychrerythraea (strain 34H / ATCC BAA-681) (Vibrio psychroerythus).